The chain runs to 131 residues: Fumarate reductase subunit C (131 aa).

A run of 3 helical transmembrane segments spans residues 30–50 (EGTAVPTVWFSIVLIYGLFAL), 61–81 (IGFLQNPVVVILNLITLAAAL), and 110–130 (IKGLWVVTAVVTVVILFVALF).

Belongs to the FrdC family. In terms of assembly, part of an enzyme complex containing four subunits: a flavoprotein (FrdA), an iron-sulfur protein (FrdB), and two hydrophobic anchor proteins (FrdC and FrdD).

It is found in the cell inner membrane. Its function is as follows. Two distinct, membrane-bound, FAD-containing enzymes are responsible for the catalysis of fumarate and succinate interconversion; fumarate reductase is used in anaerobic growth, and succinate dehydrogenase is used in aerobic growth. Anchors the catalytic components of the fumarate reductase complex to the cell inner membrane, binds quinones. The polypeptide is Fumarate reductase subunit C (Klebsiella pneumoniae subsp. pneumoniae (strain ATCC 700721 / MGH 78578)).